Reading from the N-terminus, the 455-residue chain is EP1-like glycoprotein 2 (455 aa).

The first 22 residues, 1-22 (MSRFAILVTLALAIATVSVVIA), serve as a signal peptide directing secretion. A Bulb-type lectin domain is found at 44–163 (EYDASYRFIE…NGKFVWQSFD (120 aa)). N-linked (GlcNAc...) asparagine glycans are attached at residues Asn56, Asn106, Asn191, Asn211, Asn241, and Asn289. Cys374 is modified (S-nitrosocysteine). Residues 374–455 (CSGVKGKTVN…NTSSVAYIKY (82 aa)) form the PAN domain. 2 disulfides stabilise this stretch: Cys410–Cys432 and Cys414–Cys420. Asn446 carries N-linked (GlcNAc...) asparagine glycosylation.

Its subcellular location is the secreted. The protein localises to the cell wall. The chain is EP1-like glycoprotein 2 from Arabidopsis thaliana (Mouse-ear cress).